The chain runs to 657 residues: THO complex subunit 1 (657 aa).

Position 1 is an N-acetylmethionine (M1). S2 is modified (phosphoserine). Phosphothreonine is present on T4. K31 is covalently cross-linked (Glycyl lysine isopeptide (Lys-Gly) (interchain with G-Cter in SUMO2)). Residue K133 is modified to N6-acetyllysine. Residues 133-167 (KNYLLRMCNDLLRRLSKSQNTVFCGRIQLFLARLF) are dock domain; interaction with THOC2. A disordered region spans residues 194 to 221 (QESTLGQKHTEDREEGMDVEEGEMGDDE). The segment covering 206 to 221 (REEGMDVEEGEMGDDE) has biased composition (acidic residues). The dock domain; interaction with THOC2 stretch occupies residues 227-397 (SIPIDYNLYR…WNSWKNEGCP (171 aa)). Position 300 is an N6-acetyllysine (K300). A Glycyl lysine isopeptide (Lys-Gly) (interchain with G-Cter in SUMO2) cross-link involves residue K408. Positions 414–430 (RKRAAPEDFLGKGPNKK) match the Nuclear localization signal motif. The segment at 533–569 (LPPPSEEIKTGEDEDEEDNDALLKENESPDVRRDKPI) is disordered. The residue at position 537 (S537) is a Phosphoserine. Phosphothreonine is present on T542. Positions 553–569 (ALLKENESPDVRRDKPI) are enriched in basic and acidic residues. S560 bears the Phosphoserine mark. A Death domain is found at 570 to 653 (TGEQIESFAN…DLAESLTNDT (84 aa)). K580 is covalently cross-linked (Glycyl lysine isopeptide (Lys-Gly) (interchain with G-Cter in SUMO2)). K595 participates in a covalent cross-link: Glycyl lysine isopeptide (Lys-Gly) (interchain with G-Cter in SUMO1); alternate. K595 participates in a covalent cross-link: Glycyl lysine isopeptide (Lys-Gly) (interchain with G-Cter in SUMO2); alternate.

Belongs to the THOC1 family. As to quaternary structure, component of the THO subcomplex, which is composed of THOC1, THOC2, THOC3, THOC5, THOC6 and THOC7. The THO subcomplex interacts with DDX39B to form the THO-DDX39B complex which multimerizes into a 28-subunit tetrameric assembly. Component of the transcription/export (TREX) complex at least composed of ALYREF/THOC4, DDX39B, SARNP/CIP29, CHTOP and the THO subcomplex; in the complex interacts with THOC2, THOC5 and THOC7. TREX seems to have a dynamic structure involving ATP-dependent remodeling. Binds to the hypophosphorylated form of RB1. Interacts with RNA polymerase II. Interacts with LUZP4. Interacts with THOC5. Expression is altered specifically during apoptosis and is accompanied by the appearance of novel forms with smaller apparent molecular mass. Post-translationally, polyubiquitinated, leading to proteasomal degradation; probably involves NEDD4. In terms of tissue distribution, in the inner ear, specifically expressed in inner and outer hair cells (at protein level).

It localises to the nucleus. The protein resides in the nucleoplasm. Its subcellular location is the nucleus matrix. The protein localises to the cytoplasm. It is found in the cytosol. Functionally, component of the THO subcomplex of the TREX complex which is thought to couple mRNA transcription, processing and nuclear export, and which specifically associates with spliced mRNA and not with unspliced pre-mRNA. Required for efficient export of polyadenylated RNA. The THOC1-THOC2-THOC3 core complex alone is sufficient to bind export factor NXF1-NXT1 and promote ATPase activity of DDX39B. TREX is recruited to spliced mRNAs by a transcription-independent mechanism, binds to mRNA upstream of the exon-junction complex (EJC) and is recruited in a splicing- and cap-dependent manner to a region near the 5' end of the mRNA where it functions in mRNA export to the cytoplasm via the TAP/NXF1 pathway. Regulates transcriptional elongation of a subset of genes. Involved in genome stability by preventing co-transcriptional R-loop formation. May play a role in hair cell formation, hence may be involved in hearing. Its function is as follows. Participates in an apoptotic pathway which is characterized by activation of caspase-6, increases in the expression of BAK1 and BCL2L1 and activation of NF-kappa-B. This pathway does not require p53/TP53, nor does the presence of p53/TP53 affect the efficiency of cell killing. Activates a G2/M cell cycle checkpoint prior to the onset of apoptosis. Apoptosis is inhibited by association with RB1. Essential for early embryonic development. Required for normal gene expression during postnatal testis development. In Mus musculus (Mouse), this protein is THO complex subunit 1 (Thoc1).